The sequence spans 280 residues: 4-diphosphocytidyl-2-C-methyl-D-erythritol kinase (280 aa).

Lysine 11 is an active-site residue. Residue 95 to 105 coordinates ATP; that stretch reads PVAAGLGGGSS. Aspartate 137 is a catalytic residue.

The protein belongs to the GHMP kinase family. IspE subfamily.

It catalyses the reaction 4-CDP-2-C-methyl-D-erythritol + ATP = 4-CDP-2-C-methyl-D-erythritol 2-phosphate + ADP + H(+). Its pathway is isoprenoid biosynthesis; isopentenyl diphosphate biosynthesis via DXP pathway; isopentenyl diphosphate from 1-deoxy-D-xylulose 5-phosphate: step 3/6. Functionally, catalyzes the phosphorylation of the position 2 hydroxy group of 4-diphosphocytidyl-2C-methyl-D-erythritol. The sequence is that of 4-diphosphocytidyl-2-C-methyl-D-erythritol kinase from Pelobacter propionicus (strain DSM 2379 / NBRC 103807 / OttBd1).